A 114-amino-acid polypeptide reads, in one-letter code: U17-barytoxin-Tl1a (114 aa).

The signal sequence occupies residues 1–20 (MKTIIVFLSLLVLATKFGDA). Positions 21–74 (NEGVNQEQMKEVIQNEFREDFLNEMAAMSLLQQLEAIESTLLEKEADRNSRQKR) are excised as a propeptide. Cystine bridges form between C75-C88, C82-C93, and C87-C108.

The protein belongs to the neurotoxin 14 (magi-1) family. 03 (ICK-30-40) subfamily. Expressed by the venom gland.

Its subcellular location is the secreted. Functionally, ion channel inhibitor. The chain is U17-barytoxin-Tl1a from Trittame loki (Brush-footed trapdoor spider).